A 343-amino-acid chain; its full sequence is 4-hydroxy-2-oxovalerate aldolase (343 aa).

In terms of domain architecture, Pyruvate carboxyltransferase spans 4-254 (PRLTDTTLRD…NPGLDVFSLM (251 aa)). 12–13 (RD) is a substrate binding site. A Mn(2+)-binding site is contributed by D13. Catalysis depends on H16, which acts as the Proton acceptor. S166 and H193 together coordinate substrate. Mn(2+) is bound by residues H193 and H195. Y284 contributes to the substrate binding site.

The protein belongs to the 4-hydroxy-2-oxovalerate aldolase family.

The enzyme catalyses (S)-4-hydroxy-2-oxopentanoate = acetaldehyde + pyruvate. In Chloroflexus aurantiacus (strain ATCC 29364 / DSM 637 / Y-400-fl), this protein is 4-hydroxy-2-oxovalerate aldolase.